Consider the following 364-residue polypeptide: DNA polymerase IV (364 aa).

The UmuC domain occupies Val-6–Gly-194. 2 residues coordinate Mg(2+): Asp-10 and Asp-111. Residue Glu-112 is part of the active site.

Belongs to the DNA polymerase type-Y family. Monomer. It depends on Mg(2+) as a cofactor.

The protein resides in the cytoplasm. The enzyme catalyses DNA(n) + a 2'-deoxyribonucleoside 5'-triphosphate = DNA(n+1) + diphosphate. In terms of biological role, poorly processive, error-prone DNA polymerase involved in untargeted mutagenesis. Copies undamaged DNA at stalled replication forks, which arise in vivo from mismatched or misaligned primer ends. These misaligned primers can be extended by PolIV. Exhibits no 3'-5' exonuclease (proofreading) activity. May be involved in translesional synthesis. This Nitrosopumilus maritimus (strain SCM1) protein is DNA polymerase IV.